Here is a 382-residue protein sequence, read N- to C-terminus: D-galactonate dehydratase (382 aa).

Mg(2+) is bound at residue Asp-183. The Proton donor role is filled by His-185. 2 residues coordinate Mg(2+): Glu-209 and Glu-235. The active-site Proton acceptor is the His-285. Residues 361–382 (NENPPDWRNPVWRHSDGSIAEW) are disordered.

The protein belongs to the mandelate racemase/muconate lactonizing enzyme family. GalD subfamily. Mg(2+) serves as cofactor.

The enzyme catalyses D-galactonate = 2-dehydro-3-deoxy-D-galactonate + H2O. Its pathway is carbohydrate acid metabolism; D-galactonate degradation; D-glyceraldehyde 3-phosphate and pyruvate from D-galactonate: step 1/3. In terms of biological role, catalyzes the dehydration of D-galactonate to 2-keto-3-deoxy-D-galactonate. This Xanthomonas euvesicatoria pv. vesicatoria (strain 85-10) (Xanthomonas campestris pv. vesicatoria) protein is D-galactonate dehydratase.